The following is a 163-amino-acid chain: Phosphopantetheine adenylyltransferase (163 aa).

Serine 11 provides a ligand contact to substrate. Residues 11-12 (SF) and histidine 19 contribute to the ATP site. Residues lysine 43, leucine 75, and arginine 89 each contribute to the substrate site. ATP contacts are provided by residues 90 to 92 (GLR), glutamate 100, and 125 to 131 (FGYLSSS).

The protein belongs to the bacterial CoaD family. As to quaternary structure, homohexamer. The cofactor is Mg(2+).

It is found in the cytoplasm. It catalyses the reaction (R)-4'-phosphopantetheine + ATP + H(+) = 3'-dephospho-CoA + diphosphate. The protein operates within cofactor biosynthesis; coenzyme A biosynthesis; CoA from (R)-pantothenate: step 4/5. Reversibly transfers an adenylyl group from ATP to 4'-phosphopantetheine, yielding dephospho-CoA (dPCoA) and pyrophosphate. The sequence is that of Phosphopantetheine adenylyltransferase from Geobacter metallireducens (strain ATCC 53774 / DSM 7210 / GS-15).